The following is a 395-amino-acid chain: 8-amino-7-oxononanoate synthase/2-amino-3-ketobutyrate coenzyme A ligase (395 aa).

Gly-110–Phe-111 contributes to the pyridoxal 5'-phosphate binding site. His-135 serves as a coordination point for substrate. Residues Ser-182, Asp-207–His-210, and Thr-239–Lys-242 each bind pyridoxal 5'-phosphate. Lys-242 is modified (N6-(pyridoxal phosphate)lysine). Thr-356 is a binding site for substrate.

It belongs to the class-II pyridoxal-phosphate-dependent aminotransferase family. Homodimer. The cofactor is pyridoxal 5'-phosphate.

It carries out the reaction 6-carboxyhexanoyl-[ACP] + L-alanine + H(+) = (8S)-8-amino-7-oxononanoate + holo-[ACP] + CO2. The catalysed reaction is glycine + acetyl-CoA = (2S)-2-amino-3-oxobutanoate + CoA. Its pathway is cofactor biosynthesis; biotin biosynthesis. Its function is as follows. Catalyzes the decarboxylative condensation of pimeloyl-[acyl-carrier protein] and L-alanine to produce 8-amino-7-oxononanoate (AON), [acyl-carrier protein], and carbon dioxide. Can also use pimeloyl-CoA instead of pimeloyl-ACP as substrate. It also converts 2-amino-3-ketobutyrate and CoA to glycine and acetyl-CoA. Activity is also observed with the following combinations of substrates: acetyl-CoA and either L-alanine or L-serine, pimeloyl-CoA and either glycine or L-serine, and palmitoyl-CoA with L-alanine. The chain is 8-amino-7-oxononanoate synthase/2-amino-3-ketobutyrate coenzyme A ligase from Thermus thermophilus (strain ATCC 27634 / DSM 579 / HB8).